The primary structure comprises 321 residues: Acetylglutamate kinase (321 aa).

Substrate-binding positions include 88-89 (GG), arginine 110, and asparagine 216.

Belongs to the acetylglutamate kinase family. ArgB subfamily.

The protein localises to the cytoplasm. The enzyme catalyses N-acetyl-L-glutamate + ATP = N-acetyl-L-glutamyl 5-phosphate + ADP. It participates in amino-acid biosynthesis; L-arginine biosynthesis; N(2)-acetyl-L-ornithine from L-glutamate: step 2/4. Its function is as follows. Catalyzes the ATP-dependent phosphorylation of N-acetyl-L-glutamate. This Ehrlichia chaffeensis (strain ATCC CRL-10679 / Arkansas) protein is Acetylglutamate kinase.